Reading from the N-terminus, the 410-residue chain is LL-diaminopimelate aminotransferase (410 aa).

Substrate is bound by residues Y15 and G42. Pyridoxal 5'-phosphate-binding positions include Y72, 108 to 109, Y132, N187, Y218, and 246 to 248; these read AK and SFS. Substrate-binding residues include K109, Y132, and N187. At K249 the chain carries N6-(pyridoxal phosphate)lysine. Pyridoxal 5'-phosphate is bound by residues R257 and N292. The substrate site is built by N292 and R388.

It belongs to the class-I pyridoxal-phosphate-dependent aminotransferase family. LL-diaminopimelate aminotransferase subfamily. In terms of assembly, homodimer. Pyridoxal 5'-phosphate is required as a cofactor.

The catalysed reaction is (2S,6S)-2,6-diaminopimelate + 2-oxoglutarate = (S)-2,3,4,5-tetrahydrodipicolinate + L-glutamate + H2O + H(+). The protein operates within amino-acid biosynthesis; L-lysine biosynthesis via DAP pathway; LL-2,6-diaminopimelate from (S)-tetrahydrodipicolinate (aminotransferase route): step 1/1. In terms of biological role, involved in the synthesis of meso-diaminopimelate (m-DAP or DL-DAP), required for both lysine and peptidoglycan biosynthesis. Catalyzes the direct conversion of tetrahydrodipicolinate to LL-diaminopimelate. Can also use m-DAP instead of LL-DAP as the amino-group donor. The sequence is that of LL-diaminopimelate aminotransferase from Acetivibrio thermocellus (strain ATCC 27405 / DSM 1237 / JCM 9322 / NBRC 103400 / NCIMB 10682 / NRRL B-4536 / VPI 7372) (Clostridium thermocellum).